Reading from the N-terminus, the 474-residue chain is ATP synthase subunit beta (474 aa).

152 to 159 is a binding site for ATP; sequence GGAGVGKT.

The protein belongs to the ATPase alpha/beta chains family. In terms of assembly, F-type ATPases have 2 components, CF(1) - the catalytic core - and CF(0) - the membrane proton channel. CF(1) has five subunits: alpha(3), beta(3), gamma(1), delta(1), epsilon(1). CF(0) has three main subunits: a(1), b(2) and c(9-12). The alpha and beta chains form an alternating ring which encloses part of the gamma chain. CF(1) is attached to CF(0) by a central stalk formed by the gamma and epsilon chains, while a peripheral stalk is formed by the delta and b chains.

Its subcellular location is the cell inner membrane. The catalysed reaction is ATP + H2O + 4 H(+)(in) = ADP + phosphate + 5 H(+)(out). Its function is as follows. Produces ATP from ADP in the presence of a proton gradient across the membrane. The catalytic sites are hosted primarily by the beta subunits. The polypeptide is ATP synthase subunit beta (Magnetococcus marinus (strain ATCC BAA-1437 / JCM 17883 / MC-1)).